We begin with the raw amino-acid sequence, 1030 residues long: Halotolerance protein 9 (1030 aa).

Positions C136–C166 form a DNA-binding region, zn(2)-C6 fungal-type. The disordered stretch occupies residues H185–V208. The segment covering S196 to V208 has biased composition (low complexity). S221 and S937 each carry phosphoserine.

It is found in the cytoplasm. The protein resides in the nucleus. Putative transcription factor involved in halotolerance. The chain is Halotolerance protein 9 (HAL9) from Saccharomyces cerevisiae (strain ATCC 204508 / S288c) (Baker's yeast).